Consider the following 315-residue polypeptide: Glutamyl-Q tRNA(Asp) synthetase (315 aa).

L-glutamate contacts are provided by residues R21–S25 and E63. The short motif at P24–S34 is the 'HIGH' region element. Zn(2+)-binding residues include C119, C121, Y133, and C137. Residues Y190 and R208 each coordinate L-glutamate. The 'KMSKS' region signature appears at K251–Q255. K254 contacts ATP.

It belongs to the class-I aminoacyl-tRNA synthetase family. GluQ subfamily. The cofactor is Zn(2+).

Catalyzes the tRNA-independent activation of glutamate in presence of ATP and the subsequent transfer of glutamate onto a tRNA(Asp). Glutamate is transferred on the 2-amino-5-(4,5-dihydroxy-2-cyclopenten-1-yl) moiety of the queuosine in the wobble position of the QUC anticodon. This Colwellia psychrerythraea (strain 34H / ATCC BAA-681) (Vibrio psychroerythus) protein is Glutamyl-Q tRNA(Asp) synthetase.